A 155-amino-acid polypeptide reads, in one-letter code: SsrA-binding protein (155 aa).

The tract at residues 135–155 (KRESLKRRQDQRDIQRAMKNY) is disordered.

It belongs to the SmpB family.

The protein resides in the cytoplasm. Its function is as follows. Required for rescue of stalled ribosomes mediated by trans-translation. Binds to transfer-messenger RNA (tmRNA), required for stable association of tmRNA with ribosomes. tmRNA and SmpB together mimic tRNA shape, replacing the anticodon stem-loop with SmpB. tmRNA is encoded by the ssrA gene; the 2 termini fold to resemble tRNA(Ala) and it encodes a 'tag peptide', a short internal open reading frame. During trans-translation Ala-aminoacylated tmRNA acts like a tRNA, entering the A-site of stalled ribosomes, displacing the stalled mRNA. The ribosome then switches to translate the ORF on the tmRNA; the nascent peptide is terminated with the 'tag peptide' encoded by the tmRNA and targeted for degradation. The ribosome is freed to recommence translation, which seems to be the essential function of trans-translation. The chain is SsrA-binding protein from Trichormus variabilis (strain ATCC 29413 / PCC 7937) (Anabaena variabilis).